A 183-amino-acid chain; its full sequence is Guanylate kinase (183 aa).

Positions 4-182 (GRVVVLTGPS…AITALEAAIF (179 aa)) constitute a Guanylate kinase-like domain. 11–18 (GPSGVGKG) provides a ligand contact to ATP.

It belongs to the guanylate kinase family.

The protein localises to the cytoplasm. The enzyme catalyses GMP + ATP = GDP + ADP. It catalyses the reaction dZMP + ATP = dZDP + ADP. The protein operates within purine metabolism. Functionally, essential for recycling GMP and indirectly, cGMP. Its function is as follows. (Microbial infection) Catalyzes the phosphorylation of dZMP to dZDP, when the bacterium is infected by a phage that produces the substrate for the synthesis of dZTP (2- amino-2'-deoxyadenosine 5'-triphosphate), which is then used by the phage as a DNA polymerase substrate. The chain is Guanylate kinase from Synechococcus elongatus (strain ATCC 33912 / PCC 7942 / FACHB-805) (Anacystis nidulans R2).